A 250-amino-acid chain; its full sequence is MPAKLSVNLNAIAMLRNRRDLPWPDVRHFGRLALQAGAQGLTVHPRPDQRHVRFSDLPLLRALIDDEFPKAEFNIEGYPSEDFLQLCEEAQPEQVTLVPDDPSQATSDHGWDFAAHQVFLTDVVARLKAAGMRVSLFADGDGNAQAVATAKATGADRIELYTGPYGSCYDAPEKAARELALLGATADAAHALGMGVNGGHDLTIANLPALAERIPFLAEVSIGHALTADALEFGMAETVRRFRRACGELA.

The 3-amino-2-oxopropyl phosphate site is built by Asn-8 and Arg-19. Residue His-44 is the Proton acceptor of the active site. 2 residues coordinate 1-deoxy-D-xylulose 5-phosphate: Arg-46 and His-51. Glu-76 functions as the Proton acceptor in the catalytic mechanism. Thr-106 contacts 1-deoxy-D-xylulose 5-phosphate. Catalysis depends on His-200, which acts as the Proton donor. Residues Asp-201 and 223–224 (GH) contribute to the 3-amino-2-oxopropyl phosphate site.

The protein belongs to the PNP synthase family. Homooctamer; tetramer of dimers.

The protein resides in the cytoplasm. The enzyme catalyses 3-amino-2-oxopropyl phosphate + 1-deoxy-D-xylulose 5-phosphate = pyridoxine 5'-phosphate + phosphate + 2 H2O + H(+). The protein operates within cofactor biosynthesis; pyridoxine 5'-phosphate biosynthesis; pyridoxine 5'-phosphate from D-erythrose 4-phosphate: step 5/5. Catalyzes the complicated ring closure reaction between the two acyclic compounds 1-deoxy-D-xylulose-5-phosphate (DXP) and 3-amino-2-oxopropyl phosphate (1-amino-acetone-3-phosphate or AAP) to form pyridoxine 5'-phosphate (PNP) and inorganic phosphate. This is Pyridoxine 5'-phosphate synthase from Allorhizobium ampelinum (strain ATCC BAA-846 / DSM 112012 / S4) (Agrobacterium vitis (strain S4)).